The chain runs to 246 residues: Small ribosomal subunit protein uS2 (246 aa).

The segment at 224 to 246 (AKQGEEEAEAAEETAPETETTTA) is disordered. The segment covering 229-239 (EEAEAAEETAP) has biased composition (acidic residues).

The protein belongs to the universal ribosomal protein uS2 family.

The polypeptide is Small ribosomal subunit protein uS2 (Bacillus velezensis (strain DSM 23117 / BGSC 10A6 / LMG 26770 / FZB42) (Bacillus amyloliquefaciens subsp. plantarum)).